Consider the following 295-residue polypeptide: Light-independent protochlorophyllide reductase iron-sulfur ATP-binding protein (295 aa).

ATP-binding positions include 39–44 (GIGKST) and K68. Residue S43 participates in Mg(2+) binding. The [4Fe-4S] cluster site is built by C124 and C158. Residue 209 to 210 (NR) coordinates ATP.

Belongs to the NifH/BchL/ChlL family. As to quaternary structure, homodimer. Protochlorophyllide reductase is composed of three subunits; ChlL, ChlN and ChlB. Requires [4Fe-4S] cluster as cofactor.

The enzyme catalyses chlorophyllide a + oxidized 2[4Fe-4S]-[ferredoxin] + 2 ADP + 2 phosphate = protochlorophyllide a + reduced 2[4Fe-4S]-[ferredoxin] + 2 ATP + 2 H2O. It participates in porphyrin-containing compound metabolism; chlorophyll biosynthesis (light-independent). Its function is as follows. Component of the dark-operative protochlorophyllide reductase (DPOR) that uses Mg-ATP and reduced ferredoxin to reduce ring D of protochlorophyllide (Pchlide) to form chlorophyllide a (Chlide). This reaction is light-independent. The L component serves as a unique electron donor to the NB-component of the complex, and binds Mg-ATP. The polypeptide is Light-independent protochlorophyllide reductase iron-sulfur ATP-binding protein (Prochlorococcus marinus (strain MIT 9312)).